The following is a 240-amino-acid chain: Fimbriae Y protein (240 aa).

It localises to the fimbrium. The chain is Fimbriae Y protein (fimY) from Salmonella typhimurium (strain LT2 / SGSC1412 / ATCC 700720).